Reading from the N-terminus, the 244-residue chain is 3-deoxy-manno-octulosonate cytidylyltransferase (244 aa).

The protein belongs to the KdsB family.

Its subcellular location is the cytoplasm. It catalyses the reaction 3-deoxy-alpha-D-manno-oct-2-ulosonate + CTP = CMP-3-deoxy-beta-D-manno-octulosonate + diphosphate. It participates in nucleotide-sugar biosynthesis; CMP-3-deoxy-D-manno-octulosonate biosynthesis; CMP-3-deoxy-D-manno-octulosonate from 3-deoxy-D-manno-octulosonate and CTP: step 1/1. Its pathway is bacterial outer membrane biogenesis; lipopolysaccharide biosynthesis. Its function is as follows. Activates KDO (a required 8-carbon sugar) for incorporation into bacterial lipopolysaccharide in Gram-negative bacteria. This Flavobacterium johnsoniae (strain ATCC 17061 / DSM 2064 / JCM 8514 / BCRC 14874 / CCUG 350202 / NBRC 14942 / NCIMB 11054 / UW101) (Cytophaga johnsonae) protein is 3-deoxy-manno-octulosonate cytidylyltransferase.